A 555-amino-acid chain; its full sequence is Formate--tetrahydrofolate ligase (555 aa).

Residue 65–72 (TPAGEGKT) participates in ATP binding.

This sequence belongs to the formate--tetrahydrofolate ligase family.

The catalysed reaction is (6S)-5,6,7,8-tetrahydrofolate + formate + ATP = (6R)-10-formyltetrahydrofolate + ADP + phosphate. The protein operates within one-carbon metabolism; tetrahydrofolate interconversion. This is Formate--tetrahydrofolate ligase from Thermoanaerobacter sp. (strain X514).